The sequence spans 576 residues: Calcium-dependent protein kinase 11 (576 aa).

The N-myristoyl glycine moiety is linked to residue glycine 2. The disordered stretch occupies residues 27-88 (PADAAPPALP…ANKAAPKVKR (62 aa)). Residues 41–56 (APSDQAPEPVTIPPSE) are compositionally biased toward low complexity. One can recognise a Protein kinase domain in the interval 113–371 (YTIGKKLGQG…AHEALCHPWV (259 aa)). ATP-binding positions include 119-127 (LGQGQFGTT) and lysine 142. Aspartate 237 (proton acceptor) is an active-site residue. The segment at 377 to 407 (APDKPLDSAVLSRLKQFSAMNKLKKMALRVI) is autoinhibitory domain. EF-hand domains are found at residues 414–449 (EEIA…VGAN), 450–485 (LMDS…INKV), 486–521 (EKED…FGIG), and 522–555 (DTRI…GNNA). The Ca(2+) site is built by aspartate 427, aspartate 429, serine 431, histidine 433, glutamate 438, aspartate 463, aspartate 465, serine 467, threonine 469, glutamate 474, aspartate 499, aspartate 501, serine 503, tyrosine 505, glutamate 510, aspartate 533, aspartate 535, aspartate 537, arginine 539, and glutamate 544.

It belongs to the protein kinase superfamily. Ser/Thr protein kinase family. CDPK subfamily.

Its subcellular location is the membrane. It carries out the reaction L-seryl-[protein] + ATP = O-phospho-L-seryl-[protein] + ADP + H(+). It catalyses the reaction L-threonyl-[protein] + ATP = O-phospho-L-threonyl-[protein] + ADP + H(+). Activated by calcium. Autophosphorylation may play an important role in the regulation of the kinase activity. Functionally, may play a role in signal transduction pathways that involve calcium as a second messenger. The polypeptide is Calcium-dependent protein kinase 11 (Oryza sativa subsp. japonica (Rice)).